A 729-amino-acid polypeptide reads, in one-letter code: Polyphosphate kinase (729 aa).

Residues 1–46 (MTEAQTRTEPSESSESSEAVAPAITSAADSAPEAPPATTAPAIENP) are disordered. A compositionally biased stretch (low complexity) spans 25–42 (TSAADSAPEAPPATTAPA). Asn-90 contacts ATP. Residues Arg-422 and Arg-452 each coordinate Mg(2+). His-482 serves as the catalytic Phosphohistidine intermediate. Tyr-515, Arg-611, and His-639 together coordinate ATP.

Belongs to the polyphosphate kinase 1 (PPK1) family. The cofactor is Mg(2+). An intermediate of this reaction is the autophosphorylated ppk in which a phosphate is covalently linked to a histidine residue through a N-P bond.

The catalysed reaction is [phosphate](n) + ATP = [phosphate](n+1) + ADP. Its function is as follows. Catalyzes the reversible transfer of the terminal phosphate of ATP to form a long-chain polyphosphate (polyP). This is Polyphosphate kinase from Mycolicibacterium gilvum (strain PYR-GCK) (Mycobacterium gilvum (strain PYR-GCK)).